The sequence spans 379 residues: Cytochrome b (379 aa).

4 consecutive transmembrane segments (helical) span residues Phe-34–Met-54, Trp-78–Ile-99, Trp-114–Leu-134, and Phe-179–Thr-199. Positions 84 and 98 each coordinate heme b. Heme b contacts are provided by His-183 and His-197. His-202 is a binding site for a ubiquinone. 4 helical membrane-spanning segments follow: residues Leu-227 to Ser-247, Leu-289 to His-309, Leu-321 to Ser-341, and Phe-348 to Pro-368.

It belongs to the cytochrome b family. As to quaternary structure, the cytochrome bc1 complex contains 11 subunits: 3 respiratory subunits (MT-CYB, CYC1 and UQCRFS1), 2 core proteins (UQCRC1 and UQCRC2) and 6 low-molecular weight proteins (UQCRH/QCR6, UQCRB/QCR7, UQCRQ/QCR8, UQCR10/QCR9, UQCR11/QCR10 and a cleavage product of UQCRFS1). This cytochrome bc1 complex then forms a dimer. Heme b is required as a cofactor.

Its subcellular location is the mitochondrion inner membrane. Its function is as follows. Component of the ubiquinol-cytochrome c reductase complex (complex III or cytochrome b-c1 complex) that is part of the mitochondrial respiratory chain. The b-c1 complex mediates electron transfer from ubiquinol to cytochrome c. Contributes to the generation of a proton gradient across the mitochondrial membrane that is then used for ATP synthesis. This Dromaius novaehollandiae (Emu) protein is Cytochrome b (MT-CYB).